Reading from the N-terminus, the 104-residue chain is Nucleoid-associated protein Dtur_0258 (104 aa).

Positions 84-104 are disordered; the sequence is EKSAEKMGSLTDGLPLPPGLF.

This sequence belongs to the YbaB/EbfC family. As to quaternary structure, homodimer.

Its subcellular location is the cytoplasm. It localises to the nucleoid. Binds to DNA and alters its conformation. May be involved in regulation of gene expression, nucleoid organization and DNA protection. In Dictyoglomus turgidum (strain DSM 6724 / Z-1310), this protein is Nucleoid-associated protein Dtur_0258.